Consider the following 688-residue polypeptide: Translation initiation factor IF-2 (688 aa).

Residues 62–103 (EFEVEEKVVRSKKNSNKKKKKGKGNEDKRQDNFAGRQQTQIV) are disordered. The span at 71–83 (RSKKNSNKKKKKG) shows a compositional bias: basic residues. The region spanning 190-359 (ERPAVVTIMG…LLVSEVEEYK (170 aa)) is the tr-type G domain. The segment at 199–206 (GHVDHGKT) is G1. Position 199 to 206 (199 to 206 (GHVDHGKT)) interacts with GTP. The tract at residues 224–228 (GITQH) is G2. Positions 245 to 248 (DTPG) are G3. GTP is bound by residues 245–249 (DTPGH) and 299–302 (NKMD). Positions 299–302 (NKMD) are G4. Positions 335–337 (SAI) are G5.

It belongs to the TRAFAC class translation factor GTPase superfamily. Classic translation factor GTPase family. IF-2 subfamily.

Its subcellular location is the cytoplasm. One of the essential components for the initiation of protein synthesis. Protects formylmethionyl-tRNA from spontaneous hydrolysis and promotes its binding to the 30S ribosomal subunits. Also involved in the hydrolysis of GTP during the formation of the 70S ribosomal complex. In Bacillus cereus (strain G9842), this protein is Translation initiation factor IF-2.